Consider the following 984-residue polypeptide: Putative formate dehydrogenase SAR2393 (984 aa).

The region spanning 3 to 79 is the 2Fe-2S ferredoxin-type domain; the sequence is EHLVVTLDGK…PMTVNTVNND (77 aa). Residues Cys37, Cys48, Cys51, and Cys63 each contribute to the [2Fe-2S] cluster site. Positions 79-119 constitute a 4Fe-4S His(Cys)3-ligated-type domain; the sequence is DVKDAQKEALDRILEKHMLYCTVCDYNNGDCEIHNTMDAWG. The [4Fe-4S] cluster site is built by His95, Cys99, Cys102, Cys109, Cys147, Cys150, Cys153, Cys157, Cys190, Cys193, Cys196, Cys200, Cys264, Cys267, Cys271, and Cys299. 4Fe-4S ferredoxin-type domains follow at residues 138 to 165 and 181 to 211; these read PFYR…LNET and NDVP…VNME. The interval 252 to 984 is formate dehydrogenase; that stretch reads MRKERIKKTK…YVFPGNQVDK (733 aa). The 4Fe-4S Mo/W bis-MGD-type domain maps to 257–313; sequence IKKTKTVCTYCGVGCSFEVWTKDREILKVQPSHDSPANKIATCVKGKFSWGHINSDQ.

This sequence in the C-terminal section; belongs to the prokaryotic molybdopterin-containing oxidoreductase family. The cofactor is [2Fe-2S] cluster. [4Fe-4S] cluster is required as a cofactor. Requires Mo-bis(molybdopterin guanine dinucleotide) as cofactor.

It catalyses the reaction formate + NAD(+) = CO2 + NADH. This is Putative formate dehydrogenase SAR2393 from Staphylococcus aureus (strain MRSA252).